Reading from the N-terminus, the 312-residue chain is Putative clathrin assembly protein At2g01920 (312 aa).

The 132-residue stretch at 21-152 (LITATDEKFT…ILYYNKNMIR (132 aa)) folds into the ENTH domain.

The protein resides in the membrane. It localises to the clathrin-coated pit. The protein localises to the golgi apparatus. It is found in the cytoplasmic vesicle. Its subcellular location is the clathrin-coated vesicle. This chain is Putative clathrin assembly protein At2g01920, found in Arabidopsis thaliana (Mouse-ear cress).